A 678-amino-acid chain; its full sequence is uncharacterized protein (678 aa).

A disordered region spans residues 1-26 (MGVHFDDNANTTWEATDPGVSSDCDG). 9 helical membrane-spanning segments follow: residues 119-139 (LLLLIVYCCFWMRIFYSLIYP), 245-265 (SFPCASAVHAGVISPFYGGCT), 317-337 (AAVVALNMLFGLPIFYLYDSI), 340-360 (YWINTIVGYWTLVLSLDPPLL), 371-391 (ELFSVGFQRLLPLCFVLYVVW), 405-425 (IAKVILWYPTFWLGISNNVTF), 443-463 (GALTAVGSIAATILTCAVIQA), 475-495 (YFKIYICFIGGLIALGSLPGL), and 519-539 (AYLFQGILVGLILSGVARWDF).

The protein localises to the vacuole membrane. This is an uncharacterized protein from Saccharomyces cerevisiae (strain ATCC 204508 / S288c) (Baker's yeast).